A 497-amino-acid polypeptide reads, in one-letter code: MAKVNVRDFIEEQYGLFINGEFQASESGDTLTVTNPANGEDLAKVAKASKSDVDKAVQAAQDAFDSWSKTSKEERADYLLEISRRIHEKVEHFATIESLQNGKPYRETSTIDVPLTANQFKYFASVLTTDEGSVNEIDENTMSLVVNEPVGVVGAVVAWNFPILLASWKLAPALAAGNTIVIQPSSSTPLSLIELAKIFQEVLPKGVVNVLTGKGSESGDAIFNHEGVNKLSFTGSTDVGYGVAKAGAERIVPTTLELGGKSANIIFDDANLDQVVEGAQLGILFNQGEVCSAGSRLLVQSSIYDKVMPKLKEAFENIKVGDPFDEDVKMSAQTGPEQLEKIESYVKIAEEDSNANILTGGHRLTDNGRDKGYFFEPTIIEIKDNSHQLAQEEIFGPVVVVEKFEDEAEAIKIANDSEYGLAGGIFTTNINRALNVAKAMRTGRIWINTYNQFPAGAPFGGYKKSGIGREIYKDAIKNYQQVKNIFIDTSNQTKGLY.

213–219 (GKGSESG) lines the NAD(+) pocket. Active-site residues include glutamate 257 and cysteine 291.

The protein belongs to the aldehyde dehydrogenase family.

The catalysed reaction is an aldehyde + NAD(+) + H2O = a carboxylate + NADH + 2 H(+). This chain is Putative aldehyde dehydrogenase AldA (aldA), found in Staphylococcus haemolyticus (strain JCSC1435).